The chain runs to 203 residues: IQ domain-containing protein F3 (203 aa).

A compositionally biased stretch (basic and acidic residues) spans Met1–Pro12. The segment at Met1–Glu111 is disordered. Residues Glu13–Ser82 adopt a coiled-coil conformation. A compositionally biased stretch (acidic residues) spans Asp29–Glu38. Positions Ala39–Lys51 are enriched in basic and acidic residues. The span at Asp64–Glu73 shows a compositional bias: acidic residues. 2 stretches are compositionally biased toward basic and acidic residues: residues Ala74–Lys86 and Gln96–Glu111. In terms of domain architecture, IQ spans Val129–Thr158.

The polypeptide is IQ domain-containing protein F3 (Iqcf3) (Mus musculus (Mouse)).